The following is an 82-amino-acid chain: UPF0213 protein SSP2268 (82 aa).

One can recognise a GIY-YIG domain in the interval 2 to 77 (DKHYIYIVKC…KTFSRQKKLK (76 aa)).

Belongs to the UPF0213 family.

This is UPF0213 protein SSP2268 from Staphylococcus saprophyticus subsp. saprophyticus (strain ATCC 15305 / DSM 20229 / NCIMB 8711 / NCTC 7292 / S-41).